The primary structure comprises 553 residues: Phosphoglucomutase (553 aa).

The disordered stretch occupies residues 1–25 (MQATIKRYPTSPISGQTLGTSGLRK). A compositionally biased stretch (polar residues) spans 11-20 (SPISGQTLGT). Residues Thr20, Arg24, 117–118 (SH), and Lys131 contribute to the substrate site. Catalysis depends on Ser117, which acts as the Phosphoserine intermediate. Residue Ser117 participates in Mg(2+) binding. Residues Asp289, Asp291, and Asp293 each contribute to the Mg(2+) site. Residues 293–294 (DR), Thr352, 371–373 (EES), Lys384, and Arg509 each bind substrate.

The protein belongs to the phosphohexose mutase family. Mg(2+) is required as a cofactor.

The protein resides in the cytoplasm. The enzyme catalyses alpha-D-glucose 1-phosphate = alpha-D-glucose 6-phosphate. Its function is as follows. Catalyzes the reversible conversion of glucose 1-phosphate into glucose 6-phosphate. This enzyme participates in both the breakdown and synthesis of glucose. This is Phosphoglucomutase from Entamoeba histolytica (strain ATCC 30459 / HM-1:IMSS / ABRM).